The sequence spans 89 residues: Large ribosomal subunit protein eL43 (89 aa).

The segment at 1–28 is disordered; the sequence is MVKKSKVGSTGRFGARYGRKAKRTVKDI. Residues 38–59 form a C4-type zinc finger; it reads CPKCDRPGVKRTHAGIWKCRKC.

It belongs to the eukaryotic ribosomal protein eL43 family. The cofactor is Zn(2+).

This Methanosphaera stadtmanae (strain ATCC 43021 / DSM 3091 / JCM 11832 / MCB-3) protein is Large ribosomal subunit protein eL43.